Consider the following 67-residue polypeptide: Putative ATP synthase subunit epsilon, mitochondrial (67 aa).

It belongs to the eukaryotic ATPase epsilon family. As to quaternary structure, F-type ATPases have 2 components, CF(1) - the catalytic core - and CF(0) - the membrane proton channel. CF(1) has five subunits: alpha(3), beta(3), gamma(1), delta(1), epsilon(1). CF(0) seems to have nine subunits: a, b, c, d, e, f, g, F6 and 8 (or A6L).

The protein resides in the mitochondrion. It is found in the mitochondrion inner membrane. Its function is as follows. Mitochondrial membrane ATP synthase (F(1)F(0) ATP synthase or Complex V) produces ATP from ADP in the presence of a proton gradient across the membrane which is generated by electron transport complexes of the respiratory chain. F-type ATPases consist of two structural domains, F(1) - containing the extramembraneous catalytic core, and F(0) - containing the membrane proton channel, linked together by a central stalk and a peripheral stalk. During catalysis, ATP synthesis in the catalytic domain of F(1) is coupled via a rotary mechanism of the central stalk subunits to proton translocation. Part of the complex F(1) domain and of the central stalk which is part of the complex rotary element. Rotation of the central stalk against the surrounding alpha(3)beta(3) subunits leads to hydrolysis of ATP in three separate catalytic sites on the beta subunits. The sequence is that of Putative ATP synthase subunit epsilon, mitochondrial (atp15) from Schizosaccharomyces pombe (strain 972 / ATCC 24843) (Fission yeast).